A 549-amino-acid chain; its full sequence is Glucose-6-phosphate isomerase (549 aa).

3 positions are modified to N6-acetyllysine: Lys80, Lys228, and Lys234. Glu355 acts as the Proton donor in catalysis. Catalysis depends on residues His386 and Lys514.

It belongs to the GPI family.

It is found in the cytoplasm. It catalyses the reaction alpha-D-glucose 6-phosphate = beta-D-fructose 6-phosphate. The protein operates within carbohydrate biosynthesis; gluconeogenesis. It participates in carbohydrate degradation; glycolysis; D-glyceraldehyde 3-phosphate and glycerone phosphate from D-glucose: step 2/4. Its function is as follows. Catalyzes the reversible isomerization of glucose-6-phosphate to fructose-6-phosphate. In Escherichia fergusonii (strain ATCC 35469 / DSM 13698 / CCUG 18766 / IAM 14443 / JCM 21226 / LMG 7866 / NBRC 102419 / NCTC 12128 / CDC 0568-73), this protein is Glucose-6-phosphate isomerase.